Reading from the N-terminus, the 549-residue chain is FERM domain-containing protein 1 (549 aa).

The segment at 1–40 is disordered; that stretch reads MAVPPRGRGIDPARTNPDTFPPSGARCMEPSPERPACSQQ. Residues 54 to 369 form the FERM domain; that stretch reads RDVLVLLPSR…DELELDLASR (316 aa). Disordered regions lie at residues 377 to 400 and 422 to 464; these read SSQH…YTSG and HGLH…GQSA. Over residues 430-443 the composition is skewed to low complexity; the sequence is SSSPRTSRSHPSTR. Polar residues predominate over residues 444 to 462; sequence GDSQATRQEPCTQVRTRGQ.

In Homo sapiens (Human), this protein is FERM domain-containing protein 1 (FRMD1).